The chain runs to 209 residues: Streptogramin A acetyltransferase (209 aa).

The active site involves histidine 82.

The protein belongs to the transferase hexapeptide repeat family. In terms of assembly, homohexamer.

Inactivates the A compounds of streptogramin antibiotics by acetylation, thus providing resistance to these antibiotics. This chain is Streptogramin A acetyltransferase (vatD), found in Enterococcus faecium (Streptococcus faecium).